A 123-amino-acid polypeptide reads, in one-letter code: Alpha-lactalbumin A (123 aa).

Positions lysine 1–leucine 123 constitute a C-type lysozyme domain. Cystine bridges form between cysteine 6–cysteine 120, cysteine 28–cysteine 111, cysteine 61–cysteine 77, and cysteine 73–cysteine 91. Ca(2+)-binding residues include lysine 79, aspartate 82, aspartate 84, aspartate 87, and aspartate 88.

The protein belongs to the glycosyl hydrolase 22 family. Lactose synthase (LS) is a heterodimer of a catalytic component, beta1,4-galactosyltransferase (beta4Gal-T1) and a regulatory component, alpha-lactalbumin (LA). In terms of tissue distribution, mammary gland specific. Secreted in milk.

The protein resides in the secreted. Regulatory subunit of lactose synthase, changes the substrate specificity of galactosyltransferase in the mammary gland making glucose a good acceptor substrate for this enzyme. This enables LS to synthesize lactose, the major carbohydrate component of milk. In other tissues, galactosyltransferase transfers galactose onto the N-acetylglucosamine of the oligosaccharide chains in glycoproteins. This is Alpha-lactalbumin A from Equus caballus (Horse).